Consider the following 151-residue polypeptide: RNA polymerase-binding transcription factor DksA (151 aa).

Zn(2+) contacts are provided by cysteine 114, cysteine 117, cysteine 135, and cysteine 138. Residues 114–138 (CNSCSVEIGIRRLEARPTADLCIDC) form a dksA C4-type zinc finger.

Belongs to the DksA family. Interacts directly with the RNA polymerase.

Its subcellular location is the cytoplasm. In terms of biological role, transcription factor that acts by binding directly to the RNA polymerase (RNAP). Required for negative regulation of rRNA expression and positive regulation of several amino acid biosynthesis promoters. Also required for regulation of fis expression. This is RNA polymerase-binding transcription factor DksA from Buchnera aphidicola subsp. Acyrthosiphon pisum (strain APS) (Acyrthosiphon pisum symbiotic bacterium).